A 442-amino-acid polypeptide reads, in one-letter code: Coiled-coil domain-containing protein 91 (442 aa).

A GGA1-binding motif region spans residues 1–16; it reads MDDDDFGGFEAAETFD. A disordered region spans residues 1-27; sequence MDDDDFGGFEAAETFDGEQGGNQAVSP. A phosphoserine mark is found at Ser-43 and Ser-46. Residues 48-79 form a disordered region; that stretch reads ELILDHDRSSPSSGHLRSDAVISSPDDTRADS. 2 coiled-coil regions span residues 127 to 213 and 248 to 409; these read GVHV…ALSI and CEEL…RLDQ. The segment at 211–414 is homodimerization; the sequence is LSIIVDEYKA…RRLDQVTRQR (204 aa).

As to quaternary structure, homodimer. Interacts with GGA1, GGA2 and AP1G1.

It is found in the membrane. The protein resides in the golgi apparatus. It localises to the trans-Golgi network membrane. Its subcellular location is the trans-Golgi network. Functionally, involved in the regulation of membrane traffic through the trans-Golgi network (TGN). Functions in close cooperation with the GGAs in the sorting of hydrolases to lysosomes. This Rattus norvegicus (Rat) protein is Coiled-coil domain-containing protein 91 (Ccdc91).